The sequence spans 33 residues: Protamine TP17 (33 aa).

The tract at residues 1–33 is disordered; it reads MPRRRRSSSRPVRRRRRPRVSRRRRRRGRRRRR.

Testis.

Its subcellular location is the nucleus. The protein localises to the chromosome. Functionally, protamines substitute for histones in the chromatin of sperm during the haploid phase of spermatogenesis. They compact sperm DNA into a highly condensed, stable and inactive complex. This chain is Protamine TP17, found in Oncorhynchus mykiss (Rainbow trout).